A 515-amino-acid chain; its full sequence is NADH-quinone oxidoreductase subunit N (515 aa).

Transmembrane regions (helical) follow at residues 14–34 (ITPI…EAFL), 40–60 (WSAQ…ALAL), 80–100 (APTL…ILLI), 138–158 (TEVF…CAAN), 160–180 (LLTM…MCGL), 195–215 (YFLL…LLYG), 239–259 (LFAG…VGPF), 271–291 (PTAV…GGIL), 307–327 (GVLY…GLTQ), 333–353 (MIAY…IALT), 361–381 (MFYL…ISLV), 404–424 (VAWV…TSGF), 438–458 (GMAP…FFYL), and 485–505 (AAIT…SLAL).

This sequence belongs to the complex I subunit 2 family. NDH-1 is composed of 14 different subunits. Subunits NuoA, H, J, K, L, M, N constitute the membrane sector of the complex.

The protein resides in the cell membrane. The catalysed reaction is a quinone + NADH + 5 H(+)(in) = a quinol + NAD(+) + 4 H(+)(out). Its function is as follows. NDH-1 shuttles electrons from NADH, via FMN and iron-sulfur (Fe-S) centers, to quinones in the respiratory chain. The immediate electron acceptor for the enzyme in this species is believed to be a menaquinone. Couples the redox reaction to proton translocation (for every two electrons transferred, four hydrogen ions are translocated across the cytoplasmic membrane), and thus conserves the redox energy in a proton gradient. The chain is NADH-quinone oxidoreductase subunit N from Saccharopolyspora erythraea (strain ATCC 11635 / DSM 40517 / JCM 4748 / NBRC 13426 / NCIMB 8594 / NRRL 2338).